Consider the following 1051-residue polypeptide: Kinesin-like protein KIN-4B (1051 aa).

The segment at 1–21 (MESHSSLSSSSSSSPPSSLSS) is disordered. The Kinesin motor domain maps to 25 to 380 (CVKVAVNVRP…LKYANRARNI (356 aa)). ATP is bound at residue 104–111 (GQTGSGKT). 2 coiled-coil regions span residues 414 to 448 (ATSS…RSKR) and 540 to 644 (RQHF…KMKQ). The span at 916 to 925 (SSSYSGSSRS) shows a compositional bias: low complexity. Disordered stretches follow at residues 916 to 946 (SSSY…SSTY) and 1029 to 1051 (MSKS…FQGA).

Belongs to the TRAFAC class myosin-kinesin ATPase superfamily. Kinesin family. KIN-4 subfamily. In terms of assembly, homodimer.

Functionally, kinesin-like motor protein involved in the control of the oriented deposition of cellulose microfibrils. This chain is Kinesin-like protein KIN-4B, found in Arabidopsis thaliana (Mouse-ear cress).